We begin with the raw amino-acid sequence, 361 residues long: DNA replication and repair protein RecF (361 aa).

Residue 30-37 (GPNGSGKT) coordinates ATP.

This sequence belongs to the RecF family.

It is found in the cytoplasm. In terms of biological role, the RecF protein is involved in DNA metabolism; it is required for DNA replication and normal SOS inducibility. RecF binds preferentially to single-stranded, linear DNA. It also seems to bind ATP. The sequence is that of DNA replication and repair protein RecF from Yersinia pseudotuberculosis serotype IB (strain PB1/+).